The sequence spans 120 residues: Large ribosomal subunit protein uL14 (120 aa).

The protein belongs to the universal ribosomal protein uL14 family. As to quaternary structure, part of the 50S ribosomal subunit. Forms a cluster with proteins L3 and L19. In the 70S ribosome, L14 and L19 interact and together make contacts with the 16S rRNA in bridges B5 and B8.

Its function is as follows. Binds to 23S rRNA. Forms part of two intersubunit bridges in the 70S ribosome. This chain is Large ribosomal subunit protein uL14, found in Dictyoglomus turgidum (strain DSM 6724 / Z-1310).